Here is a 948-residue protein sequence, read N- to C-terminus: UvrABC system protein A (948 aa).

33–40 (GLSGSGKS) lines the ATP pocket. The segment at 252 to 279 (CPICGFSIGELEPRMFSFNSPFGACPTC) adopts a C4-type zinc-finger fold. ABC transporter domains are found at residues 309-587 (WIPT…KKSL) and 607-935 (ASDR…KYLK). 639–646 (GVSGSGKS) is an ATP binding site. The C4-type zinc finger occupies 738-764 (CEACKGDGIIKIEMHFLPDVYVPCEVC).

This sequence belongs to the ABC transporter superfamily. UvrA family. As to quaternary structure, forms a heterotetramer with UvrB during the search for lesions.

The protein resides in the cytoplasm. In terms of biological role, the UvrABC repair system catalyzes the recognition and processing of DNA lesions. UvrA is an ATPase and a DNA-binding protein. A damage recognition complex composed of 2 UvrA and 2 UvrB subunits scans DNA for abnormalities. When the presence of a lesion has been verified by UvrB, the UvrA molecules dissociate. In Staphylococcus aureus (strain MRSA252), this protein is UvrABC system protein A.